The chain runs to 844 residues: DNA mismatch repair protein MutS (844 aa).

Position 610-617 (glycine 610–serine 617) interacts with ATP.

It belongs to the DNA mismatch repair MutS family.

Functionally, this protein is involved in the repair of mismatches in DNA. It is possible that it carries out the mismatch recognition step. This protein has a weak ATPase activity. This chain is DNA mismatch repair protein MutS, found in Francisella tularensis subsp. mediasiatica (strain FSC147).